The chain runs to 291 residues: Tumor necrosis factor ligand superfamily member 10 (291 aa).

Topologically, residues 1-17 (MPSSGALKDLSFSQHFR) are cytoplasmic. The helical; Signal-anchor for type II membrane protein transmembrane segment at 18–38 (MMVICIVLLQVLLQAVSVAVT) threads the bilayer. The Extracellular segment spans residues 39–291 (YMYFTNEMKQ…ASFFGAFLIN (253 aa)). N52 is a glycosylation site (N-linked (GlcNAc...) asparagine). The THD domain occupies 126 to 290 (VAAHITGITR…EASFFGAFLI (165 aa)). Residue C240 participates in Zn(2+) binding.

The protein belongs to the tumor necrosis factor family. In terms of assembly, homotrimer. One TNFSF10 homotrimer interacts with three TNFSF10A mononers. One TNFSF10 homotrimer interacts with three TNFSF10B mononers. In terms of processing, tyrosine phosphorylated by PKDCC/VLK. As to expression, widespread.

The protein localises to the cell membrane. Its subcellular location is the secreted. Functionally, cytokine that binds to TNFRSF10A/TRAILR1, TNFRSF10B/TRAILR2, TNFRSF10C/TRAILR3, TNFRSF10D/TRAILR4 and possibly also to TNFRSF11B/OPG. Induces apoptosis. Its activity may be modulated by binding to the decoy receptors TNFRSF10C/TRAILR3, TNFRSF10D/TRAILR4 and TNFRSF11B/OPG that cannot induce apoptosis. This Mus musculus (Mouse) protein is Tumor necrosis factor ligand superfamily member 10 (Tnfsf10).